Consider the following 877-residue polypeptide: Leucine--tRNA ligase (877 aa).

The 'HIGH' region motif lies at 43-53; sequence PYPSGRIHMGH. The 'KMSKS' region motif lies at 628 to 632; the sequence is KMSKS. Position 631 (Lys631) interacts with ATP.

This sequence belongs to the class-I aminoacyl-tRNA synthetase family.

It is found in the cytoplasm. It carries out the reaction tRNA(Leu) + L-leucine + ATP = L-leucyl-tRNA(Leu) + AMP + diphosphate. This chain is Leucine--tRNA ligase, found in Brucella suis biovar 1 (strain 1330).